A 485-amino-acid polypeptide reads, in one-letter code: Glutamyl-tRNA(Gln) amidotransferase subunit A (485 aa).

Residues lysine 80 and serine 155 each act as charge relay system in the active site. Serine 179 acts as the Acyl-ester intermediate in catalysis.

This sequence belongs to the amidase family. GatA subfamily. As to quaternary structure, heterotrimer of A, B and C subunits.

The catalysed reaction is L-glutamyl-tRNA(Gln) + L-glutamine + ATP + H2O = L-glutaminyl-tRNA(Gln) + L-glutamate + ADP + phosphate + H(+). Functionally, allows the formation of correctly charged Gln-tRNA(Gln) through the transamidation of misacylated Glu-tRNA(Gln) in organisms which lack glutaminyl-tRNA synthetase. The reaction takes place in the presence of glutamine and ATP through an activated gamma-phospho-Glu-tRNA(Gln). The sequence is that of Glutamyl-tRNA(Gln) amidotransferase subunit A from Leptospira borgpetersenii serovar Hardjo-bovis (strain L550).